Here is a 344-residue protein sequence, read N- to C-terminus: MADPRFYDRLGPLTLKDIAALSGAAISDSGTADQSVDRVTPLGEPVAGALSYAESGKLLRSAPDGALSGVAVICPPDAASEATRLGAAVLTHTAPRAAFASVLPALFQTRSFATDSFIDPSAKIGAGTRLGAGVVIGEGAEIGTDCVIGPHCVIGPGCRIGDRSRLSPHVSLQCSDIGADCNILAGAVIGEDGFGIAVSNGNTVGILHLGSVLIGDHVTIGANCTIDRGLFGATRIGASSKIDNLCHIAHNADIGENVIMAGYSGLAGSAVIADNAMLGGRVGVYDHVTIGEGARVGANSAASRDVPAGEFWVGNPAQPMRQHMRELAELRRLARPKNKTPKKG.

H250 serves as the catalytic Proton acceptor.

Belongs to the transferase hexapeptide repeat family. LpxD subfamily. As to quaternary structure, homotrimer.

The enzyme catalyses a UDP-3-O-[(3R)-3-hydroxyacyl]-alpha-D-glucosamine + a (3R)-hydroxyacyl-[ACP] = a UDP-2-N,3-O-bis[(3R)-3-hydroxyacyl]-alpha-D-glucosamine + holo-[ACP] + H(+). Its pathway is bacterial outer membrane biogenesis; LPS lipid A biosynthesis. In terms of biological role, catalyzes the N-acylation of UDP-3-O-acylglucosamine using 3-hydroxyacyl-ACP as the acyl donor. Is involved in the biosynthesis of lipid A, a phosphorylated glycolipid that anchors the lipopolysaccharide to the outer membrane of the cell. The sequence is that of UDP-3-O-acylglucosamine N-acyltransferase from Maricaulis maris (strain MCS10) (Caulobacter maris).